A 78-amino-acid chain; its full sequence is Large ribosomal subunit protein bL28 (78 aa).

The tract at residues 1–20 (MSRVCQVTGKGPVTGNNISH) is disordered.

The protein belongs to the bacterial ribosomal protein bL28 family.

In Azotobacter vinelandii (strain DJ / ATCC BAA-1303), this protein is Large ribosomal subunit protein bL28.